A 420-amino-acid chain; its full sequence is Fasciclin-like arabinogalactan protein 4 (420 aa).

The first 28 residues, 1–28 (MANVISISHFTLLALPYLLLLLSSTAAA), serve as a signal peptide directing secretion. 2 FAS1 domains span residues 29–177 (INVT…DSLI) and 205–351 (GINL…SKVL). N-linked (GlcNAc...) asparagine glycosylation is found at N30, N40, N135, N154, N167, N207, N312, and N317. A disordered region spans residues 360-388 (SGQPVATAPPQEISLSPESSSEQPSRLVS). Residues 368 to 384 (PPQEISLSPESSSEQPS) are compositionally biased toward low complexity. S396 carries GPI-anchor amidated serine lipidation. Positions 397–420 (GAVKRPLGFLVLWCWCIAFCYVLV) are cleaved as a propeptide — removed in mature form.

This sequence belongs to the fasciclin-like AGP family. As to expression, expressed in all plant organs and tissues, including guard cells in the leaf.

Its subcellular location is the cell membrane. May be a cell surface adhesion protein that is required for normal cell expansion. The chain is Fasciclin-like arabinogalactan protein 4 (FLA4) from Arabidopsis thaliana (Mouse-ear cress).